Here is a 414-residue protein sequence, read N- to C-terminus: uncharacterized protein (414 aa).

Positions 246-360 (EAPNITKLAG…LNKRVEEIRR (115 aa)) constitute a Nop domain. The interval 358 to 414 (IRRKYPKPPKKKKKEKPKAKKKEKKGKKEKSKKKKDKKKDKKGKKERKVIGKTKSRK) is disordered. Positions 361-414 (KYPKPPKKKKKEKPKAKKKEKKGKKEKSKKKKDKKKDKKGKKERKVIGKTKSRK) are enriched in basic residues.

The protein belongs to the NOP5/NOP56 family.

This is an uncharacterized protein from Methanocaldococcus jannaschii (strain ATCC 43067 / DSM 2661 / JAL-1 / JCM 10045 / NBRC 100440) (Methanococcus jannaschii).